The following is a 194-amino-acid chain: Imidazoleglycerol-phosphate dehydratase (194 aa).

The protein belongs to the imidazoleglycerol-phosphate dehydratase family.

It localises to the cytoplasm. The catalysed reaction is D-erythro-1-(imidazol-4-yl)glycerol 3-phosphate = 3-(imidazol-4-yl)-2-oxopropyl phosphate + H2O. Its pathway is amino-acid biosynthesis; L-histidine biosynthesis; L-histidine from 5-phospho-alpha-D-ribose 1-diphosphate: step 6/9. The polypeptide is Imidazoleglycerol-phosphate dehydratase (Bacillus thuringiensis (strain Al Hakam)).